A 264-amino-acid chain; its full sequence is Triosephosphate isomerase (264 aa).

12-14 (NWK) serves as a coordination point for substrate. Catalysis depends on His-104, which acts as the Electrophile. Glu-176 acts as the Proton acceptor in catalysis. Substrate is bound by residues Gly-182, Ser-222, and 243-244 (GG).

This sequence belongs to the triosephosphate isomerase family. In terms of assembly, homodimer.

The protein resides in the cytoplasm. It carries out the reaction D-glyceraldehyde 3-phosphate = dihydroxyacetone phosphate. It participates in carbohydrate biosynthesis; gluconeogenesis. Its pathway is carbohydrate degradation; glycolysis; D-glyceraldehyde 3-phosphate from glycerone phosphate: step 1/1. Its function is as follows. Involved in the gluconeogenesis. Catalyzes stereospecifically the conversion of dihydroxyacetone phosphate (DHAP) to D-glyceraldehyde-3-phosphate (G3P). The polypeptide is Triosephosphate isomerase (Bifidobacterium adolescentis (strain ATCC 15703 / DSM 20083 / NCTC 11814 / E194a)).